The chain runs to 144 residues: Small ribosomal subunit protein eS12y (144 aa).

Ser2 carries the N-acetylserine modification.

Belongs to the eukaryotic ribosomal protein eS12 family.

This is Small ribosomal subunit protein eS12y (RPS12C) from Arabidopsis thaliana (Mouse-ear cress).